Here is a 92-residue protein sequence, read N- to C-terminus: Endoribonuclease HigB (92 aa).

Histidine 92 is a catalytic residue.

As to quaternary structure, forms a complex with the antitoxin HigA which inhibits the mRNA interferase activity. The heterodimer dimerizes to form a HigB-(HigA)2-HigB tetramer that is able to bind to the DNA.

In terms of biological role, toxic component of a type II toxin-antitoxin (TA) system. A ribosome-associated translation-dependent mRNA interferase. Inhibits translation by sequence-specific cleavage of mRNA. Prefers either in-frame or out-of-frame 5'-AAA-3' codons (lysine). Also cleaves the first three AAAs of stretches of four or more A sequences. 20% of codons containing AA are cleaved and occassionally cuts even at a single A. The protein is Endoribonuclease HigB of Proteus vulgaris.